Here is a 75-residue protein sequence, read N- to C-terminus: Protease B inhibitor 1 (75 aa).

A Phosphothreonine modification is found at threonine 74.

The protein belongs to the protease inhibitor I9 family. In terms of assembly, part of the heterodimeric LMA1 complex together with the thioredoxin II/TRX2. LMA1 binds to the ATPase SEC18.

Its subcellular location is the cytoplasm. The protein localises to the nucleus. In terms of biological role, cytosolic inhibitor of vacuolar proteinase B (yscB), probably regulating protease B activity during limited proteolysis. PBI2 is a component of the LMA1 complex, which is involved in the facilitation of vesicle fusion such as homotypic vacuole and ER-derived COPII vesicle fusion with the Golgi. This chain is Protease B inhibitor 1 (PBI2), found in Saccharomyces cerevisiae (Baker's yeast).